The following is a 398-amino-acid chain: T-box transcription factor TBX1 (398 aa).

The segment at 23–72 (AAGGFPGAASPGADPYGPREPPPPPPRYDPCAAAAPGAPGPPPPPHAYPF) is disordered. Positions 29 to 38 (GAASPGADPY) are enriched in low complexity. 2 stretches are compositionally biased toward pro residues: residues 40–50 (PREPPPPPPRY) and 60–69 (APGPPPPPHA). A DNA-binding region (T-box) is located at residues 119 to 297 (LWDEFNQLGT…SNPFAKGFRD (179 aa)).

In terms of assembly, binds DNA as a dimer. Interacts with DSCR6. Interacts with NKX2-5.

The protein localises to the nucleus. Transcription factor that plays a key role in cardiovascular development by promoting pharyngeal arch segmentation during embryonic development. Also involved in craniofacial muscle development. Together with NKX2-5, acts as a regulator of asymmetric cardiac morphogenesis by promoting expression of PITX2. Acts upstream of TBX1 for the formation of the thymus and parathyroid glands from the third pharyngeal pouch. Required for hair follicle stem cell self-renewal. Binds to the palindromic T site 5'-TTCACACCTAGGTGTGAA-3' DNA sequence. The protein is T-box transcription factor TBX1 of Homo sapiens (Human).